The following is a 389-amino-acid chain: Putative nickel insertion protein (389 aa).

The protein belongs to the LarC family.

This Desulfotalea psychrophila (strain LSv54 / DSM 12343) protein is Putative nickel insertion protein.